The sequence spans 518 residues: Chromosomal replication initiator protein DnaA (518 aa).

The interval 1–73 is domain I, interacts with DnaA modulators; the sequence is MTLAEFWPLC…REELAAGRPA (73 aa). Positions 73 to 180 are domain II; the sequence is AFVFKPGEGV…DAEEARYEQT (108 aa). The segment at 144–180 is disordered; sequence HEPRQAAGPASRPESAAVAKARTDAQRDAEEARYEQT. Residues 164–177 are compositionally biased toward basic and acidic residues; that stretch reads ARTDAQRDAEEARY. The domain III, AAA+ region stretch occupies residues 181 to 397; it reads NLSPDYTFDT…GAFNRVGASS (217 aa). Positions 225, 227, 228, and 229 each coordinate ATP. The segment at 398-518 is domain IV, binds dsDNA; the sequence is RFMNRPVIDI…YEKLLILIQN (121 aa).

Belongs to the DnaA family. Oligomerizes as a right-handed, spiral filament on DNA at oriC.

It localises to the cytoplasm. Functionally, plays an essential role in the initiation and regulation of chromosomal replication. ATP-DnaA binds to the origin of replication (oriC) to initiate formation of the DNA replication initiation complex once per cell cycle. Binds the DnaA box (a 9 base pair repeat at the origin) and separates the double-stranded (ds)DNA. Forms a right-handed helical filament on oriC DNA; dsDNA binds to the exterior of the filament while single-stranded (ss)DNA is stabiized in the filament's interior. The ATP-DnaA-oriC complex binds and stabilizes one strand of the AT-rich DNA unwinding element (DUE), permitting loading of DNA polymerase. After initiation quickly degrades to an ADP-DnaA complex that is not apt for DNA replication. Binds acidic phospholipids. The chain is Chromosomal replication initiator protein DnaA from Neisseria gonorrhoeae (strain ATCC 700825 / FA 1090).